The sequence spans 485 residues: Glutamyl-tRNA(Gln) amidotransferase subunit A (485 aa).

Active-site charge relay system residues include lysine 79 and serine 154. Residue serine 178 is the Acyl-ester intermediate of the active site.

Belongs to the amidase family. GatA subfamily. As to quaternary structure, heterotrimer of A, B and C subunits.

The catalysed reaction is L-glutamyl-tRNA(Gln) + L-glutamine + ATP + H2O = L-glutaminyl-tRNA(Gln) + L-glutamate + ADP + phosphate + H(+). In terms of biological role, allows the formation of correctly charged Gln-tRNA(Gln) through the transamidation of misacylated Glu-tRNA(Gln) in organisms which lack glutaminyl-tRNA synthetase. The reaction takes place in the presence of glutamine and ATP through an activated gamma-phospho-Glu-tRNA(Gln). The sequence is that of Glutamyl-tRNA(Gln) amidotransferase subunit A from Staphylococcus epidermidis (strain ATCC 35984 / DSM 28319 / BCRC 17069 / CCUG 31568 / BM 3577 / RP62A).